The primary structure comprises 432 residues: Glutamate-1-semialdehyde 2,1-aminomutase 2 (432 aa).

The residue at position 268 (K268) is an N6-(pyridoxal phosphate)lysine.

This sequence belongs to the class-III pyridoxal-phosphate-dependent aminotransferase family. HemL subfamily. Homodimer. Pyridoxal 5'-phosphate serves as cofactor.

The protein resides in the cytoplasm. The enzyme catalyses (S)-4-amino-5-oxopentanoate = 5-aminolevulinate. The protein operates within porphyrin-containing compound metabolism; protoporphyrin-IX biosynthesis; 5-aminolevulinate from L-glutamyl-tRNA(Glu): step 2/2. This Listeria monocytogenes serotype 4b (strain F2365) protein is Glutamate-1-semialdehyde 2,1-aminomutase 2.